Reading from the N-terminus, the 182-residue chain is MTFEQLIPLIIMAFALGMDAFSVSLGMGMMPLKLRQILYIGMTIGIFHIIMPFIGMVLGRFLSEKYGDIAHFAGAILLIGLGFYIVYSTILQNEETRTAPIGISLFVFAFGVSIDSFSVGLSLGIYGAQTIITILLFGFVSMLLAWIGLLIGRHAKDMLGTYGEIVGGIILVGFGLYILFPI.

6 helical membrane-spanning segments follow: residues 6-26, 37-57, 71-91, 101-121, 131-151, and 162-182; these read LIPL…VSLG, ILYI…IGMV, HFAG…STIL, IGIS…SVGL, IITI…GLLI, and YGEI…LFPI.

It belongs to the MntP (TC 9.B.29) family.

It is found in the cell membrane. In terms of biological role, probably functions as a manganese efflux pump. The chain is Putative manganese efflux pump MntP from Bacillus cereus (strain B4264).